Here is a 616-residue protein sequence, read N- to C-terminus: Dihydroxy-acid dehydratase (616 aa).

Aspartate 81 contributes to the Mg(2+) binding site. Residue cysteine 122 participates in [2Fe-2S] cluster binding. Aspartate 123 and lysine 124 together coordinate Mg(2+). Lysine 124 carries the N6-carboxylysine modification. Residue cysteine 195 participates in [2Fe-2S] cluster binding. Glutamate 491 is a Mg(2+) binding site. Serine 517 acts as the Proton acceptor in catalysis.

It belongs to the IlvD/Edd family. As to quaternary structure, homodimer. [2Fe-2S] cluster serves as cofactor. The cofactor is Mg(2+).

It catalyses the reaction (2R)-2,3-dihydroxy-3-methylbutanoate = 3-methyl-2-oxobutanoate + H2O. The catalysed reaction is (2R,3R)-2,3-dihydroxy-3-methylpentanoate = (S)-3-methyl-2-oxopentanoate + H2O. It participates in amino-acid biosynthesis; L-isoleucine biosynthesis; L-isoleucine from 2-oxobutanoate: step 3/4. The protein operates within amino-acid biosynthesis; L-valine biosynthesis; L-valine from pyruvate: step 3/4. In terms of biological role, functions in the biosynthesis of branched-chain amino acids. Catalyzes the dehydration of (2R,3R)-2,3-dihydroxy-3-methylpentanoate (2,3-dihydroxy-3-methylvalerate) into 2-oxo-3-methylpentanoate (2-oxo-3-methylvalerate) and of (2R)-2,3-dihydroxy-3-methylbutanoate (2,3-dihydroxyisovalerate) into 2-oxo-3-methylbutanoate (2-oxoisovalerate), the penultimate precursor to L-isoleucine and L-valine, respectively. The sequence is that of Dihydroxy-acid dehydratase from Escherichia coli O17:K52:H18 (strain UMN026 / ExPEC).